Reading from the N-terminus, the 552-residue chain is Indole-3-pyruvate decarboxylase (552 aa).

Residue glutamate 52 coordinates thiamine diphosphate. A thiamine pyrophosphate binding region spans residues 385–466 (TSAFGAIDLR…ILVLNNEGYT (82 aa)). Residues aspartate 435 and asparagine 462 each contribute to the Mg(2+) site.

This sequence belongs to the TPP enzyme family. In terms of assembly, homotetramer. A metal cation is required as a cofactor. It depends on thiamine diphosphate as a cofactor.

The enzyme catalyses indole-3-pyruvate + H(+) = indole-3-acetaldehyde + CO2. Its pathway is plant hormone metabolism; auxin biosynthesis. The protein is Indole-3-pyruvate decarboxylase (ipdC) of Enterobacter cloacae.